A 228-amino-acid chain; its full sequence is L-ribulose-5-phosphate 4-epimerase UlaF (228 aa).

Substrate is bound by residues 26–27 (GN), 43–44 (SG), and 72–73 (SS). Positions 74, 93, and 95 each coordinate Zn(2+). The active-site Proton donor/acceptor is Asp118. His167 lines the Zn(2+) pocket. Tyr225 functions as the Proton donor/acceptor in the catalytic mechanism.

Belongs to the aldolase class II family. AraD/FucA subfamily. Zn(2+) is required as a cofactor.

The catalysed reaction is L-ribulose 5-phosphate = D-xylulose 5-phosphate. It functions in the pathway cofactor degradation; L-ascorbate degradation; D-xylulose 5-phosphate from L-ascorbate: step 4/4. Catalyzes the isomerization of L-ribulose 5-phosphate to D-xylulose 5-phosphate. Is involved in the anaerobic L-ascorbate utilization. This is L-ribulose-5-phosphate 4-epimerase UlaF from Escherichia coli O7:K1 (strain IAI39 / ExPEC).